Here is a 78-residue protein sequence, read N- to C-terminus: MSRVCQVTGKRPAVGNNRSHAKNATKRRFLPNLQTHRFWVESEKRFVKLRLTAKGMRIIDKKGIETVLADMRARGENV.

Residues 1–25 form a disordered region; it reads MSRVCQVTGKRPAVGNNRSHAKNAT.

It belongs to the bacterial ribosomal protein bL28 family.

In Aliivibrio fischeri (strain ATCC 700601 / ES114) (Vibrio fischeri), this protein is Large ribosomal subunit protein bL28.